The chain runs to 378 residues: Tyrosinase-like protein phomQ1' (378 aa).

The chain crosses the membrane as a helical span at residues 42–62 (TIIVVSVITFAAIIGCWVFLS). Cu cation-binding residues include His-130 and His-139. Residue Asn-209 is glycosylated (N-linked (GlcNAc...) asparagine). Positions 279 and 305 each coordinate Cu cation.

It belongs to the tyrosinase family. Requires Cu(2+) as cofactor.

It is found in the membrane. The protein operates within mycotoxin biosynthesis. Tyrosinase-like protein; part of the gene cluster that mediates the biosynthesis of the phomopsins, a group of hexapeptide mycotoxins which infects lupins and causes lupinosis disease in livestock. The pathway starts with the processing of the precursor phomA' by several endopeptidases including kexin proteases as well as the cluster-specific S41 family peptidase phomP1 and the oligopeptidase phomG' to produce 10 identical copies of the hexapeptide Tyr-Val-Ile-Pro-Ile-Asp. After being excised from the precursor peptide, the core peptides are cyclized and modified post-translationally by enzymes encoded within the gene cluster. The timing and order of proteolysis of the phomA' precursor and PTMs are still unknown. Two tyrosinase-like enzymes, phomQ1' and phomQ2, catalyze the chlorination and hydroxylation of Tyr, respectively. PhomYb, is proposed to be involved in the construction of the macrocyclic structure. The other 4 ustYa family proteins may be involved in PTMs that generate the unique structure of phomopsin A. PhomYa' is required for the hydroxylation of C-beta of Tyr. PhomYc', phomYd', and phomYe are responsible for the biosynthesis of 2,3-dehydroisoleucine (dIle), 2,3-dehydroaspartic acid (dAsp), and 3,4-dehydroproline (dPro), respectively. While dIle formation by phomYc' is indispensable for the installation of dAsp by phomYd', the order of the other PTMs have not been elucidated yet. Most of the biosynthetic enzymes likely have broad substrate specificity, and thus, there might be a metabolic grid from a precursor to phomopsin A. The enzyme(s) responsible for the biosynthesis of 3,4-dehydrovaline (dVal) have also not been identified yet. Finally, phomM' acts as an S-adenosylmethionine-dependent alpha-N-methyltransferase that catalyzes two successive N-methylation reactions, converting N-desmethyl-phomopsin A to phomopsin A and phomopsin A further to an N,N-dimethylated congener called phomopsin E. This chain is Tyrosinase-like protein phomQ1', found in Diaporthe leptostromiformis (Lupinosis disease fungus).